We begin with the raw amino-acid sequence, 184 residues long: Ribonuclease HII (184 aa).

The RNase H type-2 domain maps to 2-184; sequence AKICGIDEAG…KPKLAQSSLF (183 aa). Residues D8, E9, and D95 each contribute to the a divalent metal cation site.

Belongs to the RNase HII family. The cofactor is Mn(2+). It depends on Mg(2+) as a cofactor.

Its subcellular location is the cytoplasm. It carries out the reaction Endonucleolytic cleavage to 5'-phosphomonoester.. Functionally, endonuclease that specifically degrades the RNA of RNA-DNA hybrids. The chain is Ribonuclease HII from Campylobacter concisus (strain 13826).